The following is a 262-amino-acid chain: tRNA pseudouridine synthase A (262 aa).

Asp-51 functions as the Nucleophile in the catalytic mechanism. Tyr-109 contacts substrate.

It belongs to the tRNA pseudouridine synthase TruA family. Homodimer.

It carries out the reaction uridine(38/39/40) in tRNA = pseudouridine(38/39/40) in tRNA. Formation of pseudouridine at positions 38, 39 and 40 in the anticodon stem and loop of transfer RNAs. The protein is tRNA pseudouridine synthase A of Legionella pneumophila (strain Lens).